Here is a 504-residue protein sequence, read N- to C-terminus: Anaerobic nitric oxide reductase transcription regulator NorR (504 aa).

4-aspartylphosphate is present on Asp-57. Residues Met-187–Val-416 enclose the Sigma-54 factor interaction domain. ATP-binding positions include Gly-215–Glu-222 and Ala-278–Glu-287. A DNA-binding region (H-T-H motif) is located at residues Trp-479–Lys-498.

Its pathway is nitrogen metabolism; nitric oxide reduction. Required for the expression of anaerobic nitric oxide (NO) reductase, acts as a transcriptional activator for at least the norVW operon. Activation also requires sigma-54. The protein is Anaerobic nitric oxide reductase transcription regulator NorR of Shigella sonnei (strain Ss046).